Here is a 386-residue protein sequence, read N- to C-terminus: Cytotoxic granule associated RNA binding protein TIA1 (386 aa).

At M1 the chain carries N-acetylmethionine. RRM domains lie at 7-83 (KTLY…WATT), 106-184 (FHVF…WATR), and 214-286 (CTVY…WGKE). A disordered region spans residues 355 to 376 (GPNYSVPPPQGQNGSMLPSQPA).

As to quaternary structure, homooligomer; homooligomerization is induced by Zn(2+). Interacts with FASTK; the interactions leads to its phosphorylation. Interacts (via RRM1 and the C-terminal glutamine-rich (Q) sequence) with SNRPC/U1-C (via N-terminus); thereby facilitating spliceosomal U1 snRNP recruitment to 5' splice sites. In terms of processing, phosphorylatedby FASTK; phosphorylation occurs after FAS ligation in FAS-mediated apoptosis and before DNA fragmentation.

Its subcellular location is the nucleus. It localises to the cytoplasm. The protein localises to the stress granule. RNA-binding protein involved in the regulation of alternative pre-RNA splicing and mRNA translation by binding to uridine-rich (U-rich) RNA sequences. Binds to U-rich sequences immediately downstream from a 5' splice sites in a uridine-rich small nuclear ribonucleoprotein (U snRNP)-dependent fashion, thereby modulating alternative pre-RNA splicing. Preferably binds to the U-rich IAS1 sequence in a U1 snRNP-dependent manner; this binding is optimal if a 5' splice site is adjacent to IAS1. Activates the use of heterologous 5' splice sites; the activation depends on the intron sequence downstream from the 5' splice site, with a preference for a downstream U-rich sequence. By interacting with SNRPC/U1-C, promotes recruitment and binding of spliceosomal U1 snRNP to 5' splice sites followed by U-rich sequences, thereby facilitating atypical 5' splice site recognition by U1 snRNP. Activates splicing of alternative exons with weak 5' splice sites followed by a U-rich stretch on its own pre-mRNA and on TIAR mRNA. Acts as a modulator of alternative splicing for the apoptotic FAS receptor, thereby promoting apoptosis. Binds to the 5' splice site region of FAS intron 5 to promote accumulation of transcripts that include exon 6 at the expense of transcripts in which exon 6 is skipped, thereby leading to the transcription of a membrane-bound apoptotic FAS receptor, which promotes apoptosis. Binds to a conserved AU-rich cis element in COL2A1 intron 2 and modulates alternative splicing of COL2A1 exon 2. Also binds to the equivalent AT-rich element in COL2A1 genomic DNA, and may thereby be involved in the regulation of transcription. Involved in the repression of mRNA translation by binding to AU-rich elements (AREs) located in mRNA 3' untranslated regions (3' UTRs), including target ARE-bearing mRNAs encoding TNF and PTGS2. Also participates in the cellular response to environmental stress, by acting downstream of the stress-induced phosphorylation of EIF2S1/EIF2A to promote the recruitment of untranslated mRNAs to cytoplasmic stress granules (SGs), leading to stress-induced translational arrest. Formation and recruitment to SGs is regulated by Zn(2+). Possesses nucleolytic activity against cytotoxic lymphocyte target cells. This Mus musculus (Mouse) protein is Cytotoxic granule associated RNA binding protein TIA1 (Tia1).